The following is a 299-amino-acid chain: GTP cyclohydrolase FolE2 (299 aa).

The interval 1–25 (MKTKQWPSKTERHKRFGSVPPVAGK) is disordered.

This sequence belongs to the GTP cyclohydrolase IV family.

It carries out the reaction GTP + H2O = 7,8-dihydroneopterin 3'-triphosphate + formate + H(+). The protein operates within cofactor biosynthesis; 7,8-dihydroneopterin triphosphate biosynthesis; 7,8-dihydroneopterin triphosphate from GTP: step 1/1. Functionally, converts GTP to 7,8-dihydroneopterin triphosphate. This Halalkalibacterium halodurans (strain ATCC BAA-125 / DSM 18197 / FERM 7344 / JCM 9153 / C-125) (Bacillus halodurans) protein is GTP cyclohydrolase FolE2.